The following is a 402-amino-acid chain: Elongation factor Tu (402 aa).

The tr-type G domain occupies 16–211 (KEHINIGTIG…AVDSYIDSPV (196 aa)). The tract at residues 25-32 (GHVDHGKT) is G1. 25 to 32 (GHVDHGKT) is a GTP binding site. Residue Thr-32 participates in Mg(2+) binding. Residues 66–70 (GITIN) form a G2 region. Residues 87–90 (DCPG) form a G3 region. Residues 87–91 (DCPGH) and 142–145 (NKID) contribute to the GTP site. The G4 stretch occupies residues 142 to 145 (NKID). The G5 stretch occupies residues 181-183 (SAR).

Belongs to the TRAFAC class translation factor GTPase superfamily. Classic translation factor GTPase family. EF-Tu/EF-1A subfamily. In terms of assembly, monomer.

It localises to the cytoplasm. It carries out the reaction GTP + H2O = GDP + phosphate + H(+). Its function is as follows. GTP hydrolase that promotes the GTP-dependent binding of aminoacyl-tRNA to the A-site of ribosomes during protein biosynthesis. This chain is Elongation factor Tu, found in Mesomycoplasma hyopneumoniae (strain J / ATCC 25934 / NCTC 10110) (Mycoplasma hyopneumoniae).